Reading from the N-terminus, the 284-residue chain is 4-hydroxybenzoate octaprenyltransferase (284 aa).

8 consecutive transmembrane segments (helical) span residues 18–38 (PIGT…AAEG), 42–62 (WHVL…GCVI), 93–113 (IILF…MNPL), 136–156 (HLPQ…AWAA), 161–181 (LPWV…AYDT), 209–229 (LIIG…GLHY), 233–253 (QSFY…QHLI), and 264–284 (AFLN…VAFW).

The protein belongs to the UbiA prenyltransferase family. It depends on Mg(2+) as a cofactor.

Its subcellular location is the cell inner membrane. It catalyses the reaction all-trans-octaprenyl diphosphate + 4-hydroxybenzoate = 4-hydroxy-3-(all-trans-octaprenyl)benzoate + diphosphate. Its pathway is cofactor biosynthesis; ubiquinone biosynthesis. Catalyzes the prenylation of para-hydroxybenzoate (PHB) with an all-trans polyprenyl group. Mediates the second step in the final reaction sequence of ubiquinone-8 (UQ-8) biosynthesis, which is the condensation of the polyisoprenoid side chain with PHB, generating the first membrane-bound Q intermediate 3-octaprenyl-4-hydroxybenzoate. This chain is 4-hydroxybenzoate octaprenyltransferase, found in Vibrio vulnificus (strain CMCP6).